Consider the following 101-residue polypeptide: ATP synthase subunit c (101 aa).

The next 2 helical transmembrane spans lie at 31–51 (AFAY…GAGQ) and 81–101 (AISE…IFVG).

Belongs to the ATPase C chain family. F-type ATPases have 2 components, F(1) - the catalytic core - and F(0) - the membrane proton channel. F(1) has five subunits: alpha(3), beta(3), gamma(1), delta(1), epsilon(1). F(0) has three main subunits: a(1), b(2) and c(10-14). The alpha and beta chains form an alternating ring which encloses part of the gamma chain. F(1) is attached to F(0) by a central stalk formed by the gamma and epsilon chains, while a peripheral stalk is formed by the delta and b chains.

It localises to the cell membrane. Functionally, f(1)F(0) ATP synthase produces ATP from ADP in the presence of a proton or sodium gradient. F-type ATPases consist of two structural domains, F(1) containing the extramembraneous catalytic core and F(0) containing the membrane proton channel, linked together by a central stalk and a peripheral stalk. During catalysis, ATP synthesis in the catalytic domain of F(1) is coupled via a rotary mechanism of the central stalk subunits to proton translocation. Key component of the F(0) channel; it plays a direct role in translocation across the membrane. A homomeric c-ring of between 10-14 subunits forms the central stalk rotor element with the F(1) delta and epsilon subunits. The protein is ATP synthase subunit c of Mesomycoplasma hyopneumoniae (strain J / ATCC 25934 / NCTC 10110) (Mycoplasma hyopneumoniae).